A 280-amino-acid polypeptide reads, in one-letter code: Virginiamycin B lyase (280 aa).

Residue histidine 215 coordinates substrate. Glutamate 254 lines the Mg(2+) pocket. The active-site Proton acceptor is the histidine 256. Position 271 (glutamate 271) interacts with Mg(2+).

It belongs to the Vgb family. In terms of assembly, monomer. Mg(2+) is required as a cofactor.

In terms of biological role, inactivates the type B streptogramin antibiotics by linearizing the lactone ring at the ester linkage, generating a free phenylglycine carboxylate and converting the threonyl moiety into 2-amino-butenoic acid. The sequence is that of Virginiamycin B lyase from Mycobacterium sp. (strain JLS).